Reading from the N-terminus, the 480-residue chain is MTQMAAARNGTVTEEMERVAEREGVDPAFVRQQVADGQAVIPANVGHDSLDPMIIGREFATKVNANIGNSEETSDIEGELEKLHTAVHYGADTVMDLSTGRNLDEIRSANVTHSPVPVGTVPIYEAVKRASDPSEITHELLLDVIEKQAKQGVDYMTIHAGVRMEHLPLTDGRKTGIVSRGGSILAKWIEENGMENPLYTKFEAICEIFREYDVTFSLGDGLRPGCLADAGDDAQFAELDTLGELTRTAWKHDVQVMVEGPGHVPMDQVAEQVERQQEVCDGAPFYVLGPLVTDVAPGYDHITSAIGATEAGRAGAAMLCYVTPKEHLGLPEKSDVRDGLAAYRIAAHAADVANGREGARDWDDALSEARYAFDWREQFDLALDPDRAREYHDQTLPGDNYKEARFCSMCGVEFCSMRIDQDARSDGDMESIEADADDRTPLEDSSAAAVNRPPVGTHDGADIPGPDADMPADTEGSADD.

Substrate is bound by residues Asn66, Met95, Tyr124, His159, 179 to 181 (SRG), 220 to 223 (DGLR), and Glu259. Zn(2+) is bound at residue His263. Residue Tyr286 coordinates substrate. His327 contributes to the Zn(2+) binding site. Cys407, Cys410, and Cys415 together coordinate [4Fe-4S] cluster. A disordered region spans residues 426-480 (DGDMESIEADADDRTPLEDSSAAAVNRPPVGTHDGADIPGPDADMPADTEGSADD). Residues 470-480 (MPADTEGSADD) are compositionally biased toward acidic residues.

Belongs to the ThiC family. [4Fe-4S] cluster is required as a cofactor.

It carries out the reaction 5-amino-1-(5-phospho-beta-D-ribosyl)imidazole + S-adenosyl-L-methionine = 4-amino-2-methyl-5-(phosphooxymethyl)pyrimidine + CO + 5'-deoxyadenosine + formate + L-methionine + 3 H(+). It participates in cofactor biosynthesis; thiamine diphosphate biosynthesis. In terms of biological role, catalyzes the synthesis of the hydroxymethylpyrimidine phosphate (HMP-P) moiety of thiamine from aminoimidazole ribotide (AIR) in a radical S-adenosyl-L-methionine (SAM)-dependent reaction. This chain is Phosphomethylpyrimidine synthase, found in Haloarcula marismortui (strain ATCC 43049 / DSM 3752 / JCM 8966 / VKM B-1809) (Halobacterium marismortui).